The primary structure comprises 118 residues: Acidic phospholipase A2 homolog (118 aa).

7 disulfides stabilise this stretch: Cys-11–Cys-70, Cys-25–Cys-117, Cys-27–Cys-43, Cys-42–Cys-98, Cys-49–Cys-91, Cys-59–Cys-84, and Cys-77–Cys-89.

Belongs to the phospholipase A2 family. Group I subfamily. A49 sub-subfamily. As to expression, expressed by the venom gland.

It is found in the secreted. Functionally, snake venom phospholipase A2 (PLA2) homolog that lacks both catalytic and neurotoxicity activities. This Bungarus fasciatus (Banded krait) protein is Acidic phospholipase A2 homolog.